Consider the following 48-residue polypeptide: Delta-stichotoxin-Hcr1b (48 aa).

Cystine bridges form between cysteine 3–cysteine 43, cysteine 5–cysteine 33, and cysteine 26–cysteine 44.

This sequence belongs to the sea anemone sodium channel inhibitory toxin family. Type II subfamily.

The protein resides in the secreted. It is found in the nematocyst. Its function is as follows. Binds to site 3 of voltage-gated sodium channels and inhibits the inactivation process. This Radianthus crispa (Leathery sea anemone) protein is Delta-stichotoxin-Hcr1b.